We begin with the raw amino-acid sequence, 233 residues long: Large ribosomal subunit protein uL1 (233 aa).

It belongs to the universal ribosomal protein uL1 family. As to quaternary structure, part of the 50S ribosomal subunit.

In terms of biological role, binds directly to 23S rRNA. The L1 stalk is quite mobile in the ribosome, and is involved in E site tRNA release. Its function is as follows. Protein L1 is also a translational repressor protein, it controls the translation of the L11 operon by binding to its mRNA. The polypeptide is Large ribosomal subunit protein uL1 (Vibrio parahaemolyticus serotype O3:K6 (strain RIMD 2210633)).